The sequence spans 77 residues: UPF0291 protein BLi02035/BL02933 (77 aa).

Residues 57-77 form a disordered region; that stretch reads PEGNDVTPEKLKQEKRNRRLH.

The protein belongs to the UPF0291 family.

Its subcellular location is the cytoplasm. This Bacillus licheniformis (strain ATCC 14580 / DSM 13 / JCM 2505 / CCUG 7422 / NBRC 12200 / NCIMB 9375 / NCTC 10341 / NRRL NRS-1264 / Gibson 46) protein is UPF0291 protein BLi02035/BL02933.